We begin with the raw amino-acid sequence, 339 residues long: Anthranilate phosphoribosyltransferase (339 aa).

5-phospho-alpha-D-ribose 1-diphosphate-binding positions include Gly-82, 85 to 86 (GD), Thr-90, 92 to 95 (NIST), and 110 to 118 (KHGNRAVSS). Gly-82 serves as a coordination point for anthranilate. Residue Ser-94 participates in Mg(2+) binding. Anthranilate is bound by residues Asn-113 and Arg-168. Residues Asp-227 and Glu-228 each contribute to the Mg(2+) site.

Belongs to the anthranilate phosphoribosyltransferase family. In terms of assembly, homodimer. The cofactor is Mg(2+).

The catalysed reaction is N-(5-phospho-beta-D-ribosyl)anthranilate + diphosphate = 5-phospho-alpha-D-ribose 1-diphosphate + anthranilate. Its pathway is amino-acid biosynthesis; L-tryptophan biosynthesis; L-tryptophan from chorismate: step 2/5. Functionally, catalyzes the transfer of the phosphoribosyl group of 5-phosphorylribose-1-pyrophosphate (PRPP) to anthranilate to yield N-(5'-phosphoribosyl)-anthranilate (PRA). This chain is Anthranilate phosphoribosyltransferase, found in Clostridium beijerinckii (strain ATCC 51743 / NCIMB 8052) (Clostridium acetobutylicum).